The following is a 308-amino-acid chain: ADP,ATP carrier protein (308 aa).

3 Solcar repeats span residues 6-99 (KNFM…FKRM), 110-203 (KWFA…LKPV), and 211-297 (NNFL…LQVI). 5 consecutive transmembrane segments (helical) span residues 8 to 35 (FMVD…VKLL), 76 to 100 (TANV…KRMF), 108 to 128 (YWKW…VSLS), 179 to 200 (FNIS…YDSL), and 214 to 234 (LAAF…SYPI). ADP is bound by residues arginine 81 and lysine 93. Arginine 238 provides a ligand contact to ADP. An important for transport activity region spans residues 238 to 243 (RRRMMM). Residues 238–243 (RRRMMM) carry the Nucleotide carrier signature motif motif. The chain crosses the membrane as a helical span at residues 274–294 (AGANILRAVAGAGVLAGYDQL).

It belongs to the mitochondrial carrier (TC 2.A.29) family. In terms of assembly, monomer.

The protein localises to the mitochondrion inner membrane. The catalysed reaction is ADP(in) + ATP(out) = ADP(out) + ATP(in). Its activity is regulated as follows. The matrix-open state (m-state) is inhibited by the membrane-permeable bongkrekic acid (BKA). The cytoplasmic-open state (c-state) is inhibited by the membrane-impermeable toxic inhibitor carboxyatractyloside (CATR). Its function is as follows. ADP:ATP antiporter that mediates import of ADP into the mitochondrial matrix for ATP synthesis, and export of ATP out to fuel the cell. Cycles between the cytoplasmic-open state (c-state) and the matrix-open state (m-state): operates by the alternating access mechanism with a single substrate-binding site intermittently exposed to either the cytosolic (c-state) or matrix (m-state) side of the inner mitochondrial membrane. The chain is ADP,ATP carrier protein (ABT) from Chlamydomonas reinhardtii (Chlamydomonas smithii).